An 863-amino-acid polypeptide reads, in one-letter code: Receptor-like protein 9DC3 (863 aa).

A signal peptide spans 1-21 (MGCVKLVFFMLYVFLFQLVSS). The Extracellular segment spans residues 22 to 812 (SSLPHLCPED…EEDSPMISWQ (791 aa)). Positions 24 to 90 (LPHLCPEDQA…GVHCDETTGQ (67 aa)) are N-cap. N-linked (GlcNAc...) asparagine glycans are attached at residues asparagine 71 and asparagine 108. An LRR 1; degenerate repeat occupies 91-114 (VIALDLRCSQLQGKFHSNSSLFQL). LRR repeat units lie at residues 115 to 138 (SNLKRLDLSNNNFIGSLISPKFGE) and 140 to 163 (SDLTHLDLSDSSFTGVIPSEISHL). Residues 164–190 (SKLHVLLIGDQYGLSIVPHNFEPLLKN) form an LRR 4; degenerate repeat. 3 N-linked (GlcNAc...) asparagine glycosylation sites follow: asparagine 190, asparagine 203, and asparagine 211. LRR repeat units lie at residues 191 to 213 (LTQLRELNLYEVNLSSTVPSNFS), 214 to 237 (SHLTTLQLSGTGLRGLLPERVFHL), 240 to 262 (LEFLDLSYNSQLMVRFPTTKWNS), 264 to 286 (ASLMKLYVHSVNIADRIPESFSH), 287 to 311 (LTSLHELDMGYTNLSGPIPKPLWNL), and 312 to 336 (TNIESLDLRYNHLEGPIPQLPIFEK). Asparagine 261 carries an N-linked (GlcNAc...) asparagine glycan. N-linked (GlcNAc...) asparagine glycans are attached at residues asparagine 299 and asparagine 310. One copy of the LRR 11; degenerate repeat lies at 337–357 (LKKLSLFRNDNLDGGLEFLSF). 15 LRR repeats span residues 358–382 (NTQLERLDLSSNSLTGPIPSNISGL), 383–406 (QNLECLYLSSNHLNGSIPSWIFSL), 408–428 (SLVELDLSNNTFSGKIQEFKS), 429–452 (KTLSAVTLKQNKLKGRIPNSLLNQ), 454–476 (NLQLLLLSHNNISGHISSAICNL), 477–500 (KTLILLDLGSNNLEGTIPQCVVER), 502–524 (EYLSHLDLSKNRLSGTINTTFSV), 525–549 (GNILRVISLHGNKLTGKVPRSLINC), 551–572 (YLALLDLGNNQLNDTFPNWLGH), 573–597 (LSQLKILSLRSNKLHGPIKSSGNTN), 599–623 (FTRLQIMDLSYNGFSGNLPESILGN), 667–690 (LDSNMIINLSKNRFEGRIPSIIGD), 691–714 (LVGLRTLNLSHNVLEGHIPASFQN), 715–739 (LSVLESLDLSSNKISGEIPQQLASL), and 741–759 (FLEVLNLSHNHLVGCIPKG). N-linked (GlcNAc...) asparagine glycans are attached at residues asparagine 378, asparagine 396, and asparagine 416. Asparagine 464 carries N-linked (GlcNAc...) asparagine glycosylation. Asparagine 519 is a glycosylation site (N-linked (GlcNAc...) asparagine). Asparagine 563 is a glycosylation site (N-linked (GlcNAc...) asparagine). N-linked (GlcNAc...) asparagine glycosylation is found at asparagine 674, asparagine 698, and asparagine 714. N-linked (GlcNAc...) asparagine glycans are attached at residues asparagine 746 and asparagine 767. The segment at 760–812 (KQFDSFGNTSYQGNDGLCGFPLSKLCGGDDQVTTPAELDQEEEEEDSPMISWQ) is C-cap/acidic domain. A helical transmembrane segment spans residues 813–833 (GVLVGYGCGLVIGLSVIYIMW). Residues 834–863 (STQYPAWFSRMHLKLEQIVTTRMKKHKKRY) are Cytoplasmic-facing.

It belongs to the RLP family.

It localises to the cell membrane. Involved in plant defense. Confers resistance to the fungal pathogen C.fulvum through recognition of the AVR9 elicitor protein. In Solanum pimpinellifolium (Currant tomato), this protein is Receptor-like protein 9DC3.